The primary structure comprises 207 residues: Dephospho-CoA kinase (207 aa).

The DPCK domain maps to 8-207 (AIALTGSIGS…LPCVDCVQSS (200 aa)). 16-21 (GSGKST) contacts ATP.

It belongs to the CoaE family.

It localises to the cytoplasm. It catalyses the reaction 3'-dephospho-CoA + ATP = ADP + CoA + H(+). Its pathway is cofactor biosynthesis; coenzyme A biosynthesis; CoA from (R)-pantothenate: step 5/5. In terms of biological role, catalyzes the phosphorylation of the 3'-hydroxyl group of dephosphocoenzyme A to form coenzyme A. The chain is Dephospho-CoA kinase from Helicobacter hepaticus (strain ATCC 51449 / 3B1).